A 357-amino-acid chain; its full sequence is Sorbitol dehydrogenase 1 (357 aa).

Residue C43 participates in Zn(2+) binding. Y49 is a binding site for substrate. Residues H68 and E69 each contribute to the Zn(2+) site. Residue E154 coordinates substrate. NAD(+) is bound by residues D202, K207, 275–277 (VGM), and 299–301 (CFR). The substrate site is built by R301 and Y302.

The protein belongs to the zinc-containing alcohol dehydrogenase family. As to quaternary structure, homotetramer. It depends on Zn(2+) as a cofactor.

The catalysed reaction is keto-D-fructose + NADH + H(+) = D-sorbitol + NAD(+). The enzyme catalyses xylitol + NAD(+) = D-xylulose + NADH + H(+). Polyol dehydrogenase that catalyzes the reversible NAD(+)-dependent oxidation of various sugar alcohols. Is active with D-sorbitol (D-glucitol) and xylitol as substrates, leading to the C2-oxidized product D-fructose and D-xylulose, respectively. Is likely involved in the utilization of D-sorbitol as a sole carbon source for growth. Has no activity on mannitol and primary alcohols such as ethanol. The protein is Sorbitol dehydrogenase 1 (SOR1) of Saccharomyces cerevisiae (strain ATCC 204508 / S288c) (Baker's yeast).